We begin with the raw amino-acid sequence, 93 residues long: Small ribosomal subunit protein uS19 (93 aa).

This sequence belongs to the universal ribosomal protein uS19 family.

In terms of biological role, protein S19 forms a complex with S13 that binds strongly to the 16S ribosomal RNA. The polypeptide is Small ribosomal subunit protein uS19 (Oleidesulfovibrio alaskensis (strain ATCC BAA-1058 / DSM 17464 / G20) (Desulfovibrio alaskensis)).